Consider the following 150-residue polypeptide: D-aminoacyl-tRNA deacylase (150 aa).

A Gly-cisPro motif, important for rejection of L-amino acids motif is present at residues 138-139 (GP).

The protein belongs to the DTD family. Homodimer.

The protein localises to the cytoplasm. The catalysed reaction is glycyl-tRNA(Ala) + H2O = tRNA(Ala) + glycine + H(+). It catalyses the reaction a D-aminoacyl-tRNA + H2O = a tRNA + a D-alpha-amino acid + H(+). An aminoacyl-tRNA editing enzyme that deacylates mischarged D-aminoacyl-tRNAs. Also deacylates mischarged glycyl-tRNA(Ala), protecting cells against glycine mischarging by AlaRS. Acts via tRNA-based rather than protein-based catalysis; rejects L-amino acids rather than detecting D-amino acids in the active site. By recycling D-aminoacyl-tRNA to D-amino acids and free tRNA molecules, this enzyme counteracts the toxicity associated with the formation of D-aminoacyl-tRNA entities in vivo and helps enforce protein L-homochirality. The chain is D-aminoacyl-tRNA deacylase from Christiangramia forsetii (strain DSM 17595 / CGMCC 1.15422 / KT0803) (Gramella forsetii).